A 276-amino-acid polypeptide reads, in one-letter code: Putative oxidoreductase SadH (276 aa).

Residue Ser-142 coordinates substrate. The Proton acceptor role is filled by Tyr-155.

The protein belongs to the short-chain dehydrogenases/reductases (SDR) family.

Functionally, required for maintaining the appropriate mycolic acid composition and permeability of the envelope on its exposure to acidic pH. The protein is Putative oxidoreductase SadH (sadH) of Mycobacterium tuberculosis (strain CDC 1551 / Oshkosh).